Consider the following 483-residue polypeptide: Probable cytochrome P450 517A1 (483 aa).

Residues methionine 1 to lysine 21 traverse the membrane as a helical segment. Cysteine 429 is a binding site for heme.

It belongs to the cytochrome P450 family. The cofactor is heme.

The protein localises to the membrane. The sequence is that of Probable cytochrome P450 517A1 (cyp517A1) from Dictyostelium discoideum (Social amoeba).